Here is a 944-residue protein sequence, read N- to C-terminus: MSAGSRALEAVIRMRDEASRTLRQVRDATRALQNQTNSTSQAQERLQEQFRKVSNAAKIAGAGIVTGIGAGLVSASKAGAEFETAMTKTSTMFGDTKVDTENLNNKVLELSKNTGIAASSIGESLYNALSSGIPVTKDMGSAMDFMTKNAKLSKAGFTDIDTALTATAKVLNAYKMDVSETDRVHKVMMQTQNKGITTVGELGATLAQVTPTASAMSFSFEQVGASLANMTAQGTPTAQATTQLNSLLAELGKTGTVANKSLLSATKGTKYAGKSFKELMQAGVPLNEILNLMDGSAKKNKKSLIDMFGSIEAGKAALALSGQNSEQYTNNLKAMSTQADVVSSAYAKMSNTLESKVGILKESFKNLGIEIYSKLKEPLKNAAETGIQCLSDLDKQFSSGSLKAGISQIAQSFGDLTSTIIKVATKALPTMIKSLSWVLKNGPTIASVLVSIKVASIMTSAVKSIVALKKAWIAAKLAVRVYMVGMAEAGTVLSGFQILVGVLTKNMTIAQARTMLLAKASALLGGPIGIAIVAITALVAGLVVLWNTNKGFRDFVINAWNNIKETTTKVWGGICNFFTQTIPQAWNDLCTSFSNAVQWFGEMWNNIKQAFINGWNAIVAFFTQTIPTWINNIGVWFGQLPAKIGYGLGFALGKIISWGISVWTYLVTNVPIWINNVVTFFAQLPNKIWVWLVSTVQKIGQWGIAMLTSAQIYTSMIINNIVTFFTTLPGRIWTWLTNTVQKVVTWGSQMATKGKEGAKKLINTVVDTLKSLPKKVMDIGKNIVKGLWNGITGAGGWLKGKVNDFAKGVIDGFKNGFGVHSPSWKLRDLVGRFLPLGIWERYKSRIAKFEEYIDNVVSNLTQRMYKPQEIEESDYTRKYKEAIAQRTEQNTINKTDSKTTNNKEDNNITININLGGVTVKEEADINKLTKMLVREIKLGIAGGV.

Residues 13–52 (RMRDEASRTLRQVRDATRALQNQTNSTSQAQERLQEQFRK) are a coiled coil.

The protein belongs to the P2likevirus tape measure protein family.

Functionally, serves as a base for tail tube protein polymerization and acts as a template for tail length determination. The polypeptide is Probable tape measure protein (Clostridioides difficile (Peptoclostridium difficile)).